A 309-amino-acid chain; its full sequence is Pyrroline-5-carboxylate reductase 1, mitochondrial (309 aa).

N-acetylserine is present on Ser2. Residues 6–11 (IGAGQL) and Ser34 contribute to the NADP(+) site. Positions 8, 10, 11, 34, 36, 56, 70, 71, and 97 each coordinate NADPH. Residues Asn56, 69–72 (AVKP), and 95–97 (CAA) each bind NADP(+). Residue Glu164 coordinates L-proline. Asn230 lines the NADPH pocket. L-proline-binding residues include Ala237 and Thr238. Ser278 and Ser301 each carry phosphoserine.

Belongs to the pyrroline-5-carboxylate reductase family. In terms of assembly, homodecamer; composed of 5 homodimers. Interacts with LTO1. As to expression, highly expressed in osteoblasts and skin.

The protein localises to the mitochondrion. It catalyses the reaction L-proline + NADP(+) = (S)-1-pyrroline-5-carboxylate + NADPH + 2 H(+). It carries out the reaction L-proline + NAD(+) = (S)-1-pyrroline-5-carboxylate + NADH + 2 H(+). It functions in the pathway amino-acid biosynthesis; L-proline biosynthesis; L-proline from L-glutamate 5-semialdehyde: step 1/1. Functionally, oxidoreductase that catalyzes the last step in proline biosynthesis, which corresponds to the reduction of pyrroline-5-carboxylate to L-proline using NAD(P)H. At physiologic concentrations, has higher specific activity in the presence of NADH. Involved in the cellular response to oxidative stress. The sequence is that of Pyrroline-5-carboxylate reductase 1, mitochondrial from Mus musculus (Mouse).